Consider the following 744-residue polypeptide: MKESEDIIINNQNRCTLHPNKNLEFLCLDCKFMPCCSLCTSRKGEHHGHKTDSLESSASNIHSLINDFKDNIYPKLIERKENDQILLKESNETFKEIQSQNDDNNNLLKNEFKQIHNILSFVELDIEKQLSTNLDQNILINTIITSSINNDNKIISTILNNNNNSIIDKLNYFTQINNQQDNDDNDDCYQIDTDTIELIKQYQNSLLILKNSNNINNLTKLKEYNNQILKFDNQTINNIKNSFKSIYSFGDIPNDAIDYNINNNNNNNNNNNNNNNNELNNSNNKNEFIKILNHNFYIYSESDESSFLTDDFESLAFKDNCNILSKLKKLPNNVLLLSGFNQKLTKGIIPEGVKVLYIGDIKQELIIDSIPNTVTTVGLWYGFNQKLTKGIIPEGVKELRLGDIKQELIIDSIPSTLTTVILCDGFNQKLTKGIIPEGVKVLYIGDIKQELIIDSIPNTVTRVRLLDGFNQKLTKGIIPESVKELHIGNIKQELIIDSIPNTVTTITLCDGFNQKLTKGIIPEGVKELYIGNLKQELIIDSIPNTVTTVRLCDGFNQKLTKGIIPEGVKELYIRDIKQELIIDSIPNTVTTVILCDGFNQKLTKGIIPEWVKGLCLGDIKQELIIDSIPNTVTTVRLLDGFNQKLTKGIIPESVKELYIDDIKQELIIDSIPNTVTTVRLLDGFNQKLTKGIIPEWVKELHIGDIKQELIIDSIPNTLNNVYIYKSCKKLIYSFVPVNVKIVNI.

FNIP repeat units lie at residues 340–376 (FNQK…TVTT), 383–422 (FNQK…TVIL), 426–462 (FNQK…TVTR), 469–508 (FNQK…TITL), 512–550 (FNQK…TTVR), 555–594 (FNQK…TVIL), 598–635 (FNQK…VTTV), 641–678 (FNQK…VTTV), and 684–723 (FNQK…NVYI).

This is FNIP repeat-containing protein cigB (cigB) from Dictyostelium discoideum (Social amoeba).